We begin with the raw amino-acid sequence, 951 residues long: Spliceosome associated factor 3, U4/U6 recycling protein (951 aa).

Positions 1 to 58 (MAATGNEEQTLLPDIEEEAEGMEREMESEDDEEEGMGVEHSEEEDEEDTSEDERENEA) are disordered. Residues 14-56 (DIEEEAEGMEREMESEDDEEEGMGVEHSEEEDEEDTSEDEREN) show a composition bias toward acidic residues. HAT repeat units follow at residues 88–120 (GKLH…DEIR), 126–157 (SDRE…YSIG), 163–199 (GGIE…FEIV), 222–255 (AQLE…WADD), 304–336 (GDPA…YLDR), 339–371 (KIKD…ALER), 374–410 (ADHQ…YLRR), and 467–500 (KNMQ…LERS). The tract at residues 517–941 (CTSDYPEHVC…LDTQTKSLSN (425 aa)) is necessary and sufficient for U6 snRNA binding. Residues 533–593 (ERVEGSLEDW…VKADKKAQKK (61 aa)) are a coiled coil. Basic and acidic residues predominate over residues 567-581 (EALHARQEEEKAEQR). Residues 567–686 (EALHARQEEE…HDMPKEQRKD (120 aa)) form a disordered region. Positions 582–596 (RKVKADKKAQKKGQK) are enriched in basic residues. The span at 608-619 (DDDEEEWGEEAE) shows a compositional bias: acidic residues. Over residues 674-686 (RQPHDMPKEQRKD) the composition is skewed to basic and acidic residues. RRM domains lie at 688-766 (NCVF…PCVD) and 785-862 (HKIF…ISNP). The disordered stretch occupies residues 905 to 938 (RQSTPDAKAENGTISAPHATVTDGETSLDTQTKS). Positions 927–938 (DGETSLDTQTKS) are enriched in polar residues.

It localises to the nucleus. The protein resides in the nucleoplasm. Its subcellular location is the cajal body. The protein localises to the nucleus speckle. It is found in the cytoplasm. U6 snRNP-binding protein that functions as a recycling factor of the splicing machinery. Promotes the initial reassembly of U4 and U6 snRNPs following their ejection from the spliceosome during its maturation. May also function as a substrate targeting factor for deubiquitinases and mediate the deubiquitination of components of the spliceosome and histones. The sequence is that of Spliceosome associated factor 3, U4/U6 recycling protein from Danio rerio (Zebrafish).